Reading from the N-terminus, the 186-residue chain is MNDYINGFLYKIDDKFLYLELNYLGYRYLYLKSDLKNFKLNENNKVYIAINVIDNHFKYYGFFNQLVRDLFEILININTIGEKTAFLILENYSYQELIDIFKNGKTDKILQLKGIGNYTARLIINSVQKELFNNKISEKKNKVITSLEKLGYKTKDIYKIIINVDEDLTIDELTKYVLEKLSYINN.

The tract at residues 1 to 63 (MNDYINGFLY…DNHFKYYGFF (63 aa)) is domain I. Residues 64–137 (NQLVRDLFEI…QKELFNNKIS (74 aa)) are domain II. Residue serine 137 is a region of interest, flexible linker. The domain III stretch occupies residues 137-186 (SEKKNKVITSLEKLGYKTKDIYKIIINVDEDLTIDELTKYVLEKLSYINN).

Belongs to the RuvA family. As to quaternary structure, homotetramer. Forms an RuvA(8)-RuvB(12)-Holliday junction (HJ) complex. HJ DNA is sandwiched between 2 RuvA tetramers; dsDNA enters through RuvA and exits via RuvB. An RuvB hexamer assembles on each DNA strand where it exits the tetramer. Each RuvB hexamer is contacted by two RuvA subunits (via domain III) on 2 adjacent RuvB subunits; this complex drives branch migration. In the full resolvosome a probable DNA-RuvA(4)-RuvB(12)-RuvC(2) complex forms which resolves the HJ.

It localises to the cytoplasm. In terms of biological role, the RuvA-RuvB-RuvC complex processes Holliday junction (HJ) DNA during genetic recombination and DNA repair, while the RuvA-RuvB complex plays an important role in the rescue of blocked DNA replication forks via replication fork reversal (RFR). RuvA specifically binds to HJ cruciform DNA, conferring on it an open structure. The RuvB hexamer acts as an ATP-dependent pump, pulling dsDNA into and through the RuvAB complex. HJ branch migration allows RuvC to scan DNA until it finds its consensus sequence, where it cleaves and resolves the cruciform DNA. The chain is Holliday junction branch migration complex subunit RuvA from Mycoplasma capricolum subsp. capricolum (strain California kid / ATCC 27343 / NCTC 10154).